A 391-amino-acid chain; its full sequence is PPE family protein PPE18 (391 aa).

It belongs to the mycobacterial PPE family. Interacts with human TLR2.

It is found in the secreted. The protein resides in the cell wall. The protein localises to the cell surface. Could be a crucial virulence factor for intracellular survival of M.tuberculosis. Favors development of Th2-type response, and down-regulates the pro-inflammatory and Th1-type response. Specifically interacts with the human Toll-like receptor 2 (TLR2), leading to an early and sustained activation of p38 MAPK, which induces IL-10 production and activates Th2-type immune response. Also inhibits pro-inflammatory cytokines IL-12p40 and TNF-alpha production. Acts by up-regulating the expression as well as tyrosine phosphorylation of suppressor of cytokine signaling 3 (SOCS-3), leading to the inhibition of phosphorylation of I-kappa-B-alpha, thereby preventing nuclear translocation of the NF-kappa-B/REL subunits and expression of NF-kappa-B regulated genes like IL-12 and TNF-alpha. Induction of SOCS-3 probably depends on the activation of p38 MAPK. The sequence is that of PPE family protein PPE18 from Mycobacterium tuberculosis (strain ATCC 25618 / H37Rv).